Reading from the N-terminus, the 888-residue chain is DNA mismatch repair protein MutS (888 aa).

An ATP-binding site is contributed by 641 to 648; it reads GPNMAGKS.

Belongs to the DNA mismatch repair MutS family.

This protein is involved in the repair of mismatches in DNA. It is possible that it carries out the mismatch recognition step. This protein has a weak ATPase activity. In Rickettsia bellii (strain OSU 85-389), this protein is DNA mismatch repair protein MutS.